A 250-amino-acid polypeptide reads, in one-letter code: tRNA (guanine-N(1)-)-methyltransferase (250 aa).

Residues G116 and 136–141 each bind S-adenosyl-L-methionine; that span reads IGDYVL.

This sequence belongs to the RNA methyltransferase TrmD family. Homodimer.

The protein localises to the cytoplasm. It carries out the reaction guanosine(37) in tRNA + S-adenosyl-L-methionine = N(1)-methylguanosine(37) in tRNA + S-adenosyl-L-homocysteine + H(+). Its function is as follows. Specifically methylates guanosine-37 in various tRNAs. The polypeptide is tRNA (guanine-N(1)-)-methyltransferase (Pseudomonas fluorescens (strain ATCC BAA-477 / NRRL B-23932 / Pf-5)).